A 308-amino-acid polypeptide reads, in one-letter code: Elongation factor Ts (308 aa).

Residues 80–83 are involved in Mg(2+) ion dislocation from EF-Tu; it reads TDFV.

Belongs to the EF-Ts family.

The protein resides in the cytoplasm. Functionally, associates with the EF-Tu.GDP complex and induces the exchange of GDP to GTP. It remains bound to the aminoacyl-tRNA.EF-Tu.GTP complex up to the GTP hydrolysis stage on the ribosome. In Erythrobacter litoralis (strain HTCC2594), this protein is Elongation factor Ts.